Reading from the N-terminus, the 277-residue chain is uncharacterized protein (277 aa).

4 consecutive transmembrane segments (helical) span residues 37 to 59, 63 to 82, 214 to 236, and 246 to 268; these read YLRY…LYIW, LIFG…PKVI, MLCG…KTYI, and WITS…TYLF.

The protein localises to the cell membrane. This is an uncharacterized protein from Bacillus anthracis.